The following is a 241-amino-acid chain: Lipoprotein-releasing system ATP-binding protein LolD 2 (241 aa).

An ABC transporter domain is found at 6–241; the sequence is LDAQQLSKSY…YKSYEKSTAV (236 aa). 43 to 50 lines the ATP pocket; sequence GASGSGKT.

Belongs to the ABC transporter superfamily. Lipoprotein translocase (TC 3.A.1.125) family. The complex is composed of two ATP-binding proteins (LolD) and two transmembrane proteins (LolC and LolE).

Its subcellular location is the cell inner membrane. Functionally, part of the ABC transporter complex LolCDE involved in the translocation of mature outer membrane-directed lipoproteins, from the inner membrane to the periplasmic chaperone, LolA. Responsible for the formation of the LolA-lipoprotein complex in an ATP-dependent manner. The polypeptide is Lipoprotein-releasing system ATP-binding protein LolD 2 (Chlorobium chlorochromatii (strain CaD3)).